A 258-amino-acid polypeptide reads, in one-letter code: GTP cyclohydrolase FolE2 (258 aa).

Belongs to the GTP cyclohydrolase IV family.

It carries out the reaction GTP + H2O = 7,8-dihydroneopterin 3'-triphosphate + formate + H(+). The protein operates within cofactor biosynthesis; 7,8-dihydroneopterin triphosphate biosynthesis; 7,8-dihydroneopterin triphosphate from GTP: step 1/1. Its function is as follows. Converts GTP to 7,8-dihydroneopterin triphosphate. The polypeptide is GTP cyclohydrolase FolE2 (Lawsonia intracellularis (strain PHE/MN1-00)).